An 878-amino-acid chain; its full sequence is Multiple C2 and transmembrane domain-containing protein 2 (878 aa).

2 disordered regions span residues 20 to 40 and 143 to 178; these read LINL…DLRV and KPSL…ESTL. The segment covering 149–161 has biased composition (basic and acidic residues); it reads DAPEEHDKTHGND. 3 C2 domains span residues 177 to 292, 334 to 452, and 486 to 607; these read TLGE…EHIL, SKSS…CLEL, and PSER…CYVL. Asp210, Asp216, Asp263, Asp265, and Asp270 together coordinate Ca(2+). The Ca(2+) site is built by Asp525, Asp531, Asp577, Asp579, and Asp585. The chain crosses the membrane as a helical span at residues 694 to 714; sequence FVVFLVTVWNFELYMIPLALL. A disordered region spans residues 728-752; that stretch reads KASSTQDSQESTDVEEEGKEEEKES. Residues 737–746 are compositionally biased toward acidic residues; that stretch reads ESTDVEEEGK. Residues 794-814 form a helical membrane-spanning segment; the sequence is PFLSLLACLILAITTVILYFI.

The protein belongs to the MCTP family. The cofactor is Ca(2+).

The protein resides in the membrane. In terms of biological role, might play a role in the development of cardiac outflow tract. The protein is Multiple C2 and transmembrane domain-containing protein 2 (Mctp2) of Mus musculus (Mouse).